Reading from the N-terminus, the 332-residue chain is N-acetyl-gamma-glutamyl-phosphate reductase (332 aa).

The active site involves Cys144.

It belongs to the NAGSA dehydrogenase family. Type 1 subfamily.

It localises to the cytoplasm. The enzyme catalyses N-acetyl-L-glutamate 5-semialdehyde + phosphate + NADP(+) = N-acetyl-L-glutamyl 5-phosphate + NADPH + H(+). Its pathway is amino-acid biosynthesis; L-arginine biosynthesis; N(2)-acetyl-L-ornithine from L-glutamate: step 3/4. Functionally, catalyzes the NADPH-dependent reduction of N-acetyl-5-glutamyl phosphate to yield N-acetyl-L-glutamate 5-semialdehyde. This Archaeoglobus fulgidus (strain ATCC 49558 / DSM 4304 / JCM 9628 / NBRC 100126 / VC-16) protein is N-acetyl-gamma-glutamyl-phosphate reductase.